Here is a 229-residue protein sequence, read N- to C-terminus: MAGHDSGNAKRGRSPSFGVFVRKPVERASAKGTSDGAVDSQAIRIDAAQSWPDDAVEVGAVVDAYGLKGWVKLAAHAGAGRGGDALLKARDWWLQKGAERKFARVTQAKLHGDTVVAHPDGSVDRDTALALRGARVFVRRGDFPALAADEFYWVDLIGLDVVNEAGVALGKIADMIDNGVHSIMRVEYPATGKDGRPKTGERLIPFVGVYVKAVEQAAGRVVVDWEADY.

The region spanning 148-229 (ADEFYWVDLI…RVVVDWEADY (82 aa)) is the PRC barrel domain.

It belongs to the RimM family. As to quaternary structure, binds ribosomal protein uS19.

The protein resides in the cytoplasm. In terms of biological role, an accessory protein needed during the final step in the assembly of 30S ribosomal subunit, possibly for assembly of the head region. Essential for efficient processing of 16S rRNA. May be needed both before and after RbfA during the maturation of 16S rRNA. It has affinity for free ribosomal 30S subunits but not for 70S ribosomes. This chain is Ribosome maturation factor RimM, found in Burkholderia pseudomallei (strain 1710b).